We begin with the raw amino-acid sequence, 134 residues long: Histone H2A (134 aa).

Over residues 1–11 (MTGGGKSGGKA) the composition is skewed to gly residues. The disordered stretch occupies residues 1–24 (MTGGGKSGGKASGSKNAQSRSSKA). 2 positions are modified to N6-acetyllysine: lysine 6 and lysine 10. Glutamine 107 carries the N5-methylglutamine modification.

The protein belongs to the histone H2A family. As to quaternary structure, the nucleosome is a histone octamer containing two molecules each of H2A, H2B, H3 and H4 assembled in one H3-H4 heterotetramer and two H2A-H2B heterodimers. The octamer wraps approximately 147 bp of DNA. Acetylated by ESA1 to form H2AK4ac and H2AK7ac.

It localises to the nucleus. It is found in the chromosome. Its function is as follows. Core component of nucleosome. Nucleosomes wrap and compact DNA into chromatin, limiting DNA accessibility to the cellular machineries which require DNA as a template. Histones thereby play a central role in transcription regulation, DNA repair, DNA replication and chromosomal stability. DNA accessibility is regulated via a complex set of post-translational modifications of histones, also called histone code, and nucleosome remodeling. The sequence is that of Histone H2A (HTA1) from Gibberella zeae (strain ATCC MYA-4620 / CBS 123657 / FGSC 9075 / NRRL 31084 / PH-1) (Wheat head blight fungus).